We begin with the raw amino-acid sequence, 155 residues long: Ribosome-binding factor A (155 aa).

2 stretches are compositionally biased toward basic and acidic residues: residues 116–125 (ARQRDQEVAR) and 142–155 (SPHE…ADGW). The tract at residues 116–155 (ARQRDQEVARQAEGATPAGDANPYKTSPHEGRPESEADGW) is disordered.

This sequence belongs to the RbfA family. In terms of assembly, monomer. Binds 30S ribosomal subunits, but not 50S ribosomal subunits or 70S ribosomes.

It localises to the cytoplasm. Its function is as follows. One of several proteins that assist in the late maturation steps of the functional core of the 30S ribosomal subunit. Associates with free 30S ribosomal subunits (but not with 30S subunits that are part of 70S ribosomes or polysomes). Required for efficient processing of 16S rRNA. May interact with the 5'-terminal helix region of 16S rRNA. The polypeptide is Ribosome-binding factor A (Corynebacterium kroppenstedtii (strain DSM 44385 / JCM 11950 / CIP 105744 / CCUG 35717)).